Here is a 153-residue protein sequence, read N- to C-terminus: Insulin-like growth factor 1 (153 aa).

Residues 49–77 form a b region; it reads GPETLCGAELVDALQFVCGDRGFYFSKPT. Intrachain disulfides connect C54-C96, C66-C109, and C95-C100. Positions 78–89 are c; it reads GYGSSSRRLHHK. The interval 90–110 is a; that stretch reads GIVDECCFQSCDLRRLEMYCA. The tract at residues 111–118 is d; the sequence is PIKPPKSA. A propeptide spans 119–153 (e peptide); the sequence is RSVRAQRHTDMPKAQKEVHLKNTSRGNTGNRNYRM. Residues 119–153 form a disordered region; sequence RSVRAQRHTDMPKAQKEVHLKNTSRGNTGNRNYRM. Residues 125-138 are compositionally biased toward basic and acidic residues; the sequence is RHTDMPKAQKEVHL. Over residues 139–153 the composition is skewed to polar residues; it reads KNTSRGNTGNRNYRM.

It belongs to the insulin family. As to quaternary structure, forms a ternary complex with IGFR1 and ITGAV:ITGB3. Forms a ternary complex with IGFR1 and ITGA6:ITGB4. Forms a ternary complex with IGFBP3 and ALS.

The protein localises to the secreted. In terms of biological role, the insulin-like growth factors, isolated from plasma, are structurally and functionally related to insulin but have a much higher growth-promoting activity. Acts as a ligand for IGF1R. Binds to the alpha subunit of IGF1R, leading to the activation of the intrinsic tyrosine kinase activity which autophosphorylates tyrosine residues in the beta subunit thus initiatiating a cascade of down-stream signaling events leading to activation of the PI3K-AKT/PKB and the Ras-MAPK pathways. Binds to integrins. Its binding to integrins and subsequent ternary complex formation with integrins and IGFR1 are essential for IGF1 signaling. The polypeptide is Insulin-like growth factor 1 (Gallus gallus (Chicken)).